We begin with the raw amino-acid sequence, 123 residues long: MPTVNQLIRKPRKPLVKRNKVPAMQACPQKRGVCTRVYTTTPKKPNSALRKVARVRLTNQFEVTSYIPGEGHNLQEHSVVLIRGGRVKDLPGVRYHIIRGVLDTQGVKDRRQRRSKYGAKRPK.

At D89 the chain carries 3-methylthioaspartic acid. A disordered region spans residues 104–123 (TQGVKDRRQRRSKYGAKRPK). Basic residues predominate over residues 110–123 (RRQRRSKYGAKRPK).

Belongs to the universal ribosomal protein uS12 family. As to quaternary structure, part of the 30S ribosomal subunit. Contacts proteins S8 and S17. May interact with IF1 in the 30S initiation complex.

With S4 and S5 plays an important role in translational accuracy. Functionally, interacts with and stabilizes bases of the 16S rRNA that are involved in tRNA selection in the A site and with the mRNA backbone. Located at the interface of the 30S and 50S subunits, it traverses the body of the 30S subunit contacting proteins on the other side and probably holding the rRNA structure together. The combined cluster of proteins S8, S12 and S17 appears to hold together the shoulder and platform of the 30S subunit. The chain is Small ribosomal subunit protein uS12 from Parvibaculum lavamentivorans (strain DS-1 / DSM 13023 / NCIMB 13966).